Reading from the N-terminus, the 377-residue chain is Meiotic driver cw9 (377 aa).

Disordered regions lie at residues 1–49 (MKNK…DLNN) and 64–100 (NKSTTPPDYDENRLPITDEGNNPPNTHRENHSSGTTD). Over residues 11–29 (SMDEMSAKNDNEIDLEKGP) the composition is skewed to basic and acidic residues. Helical transmembrane passes span 105-125 (FLIKLLISFTSIILFNAPAVC), 142-162 (WTLFGFWCLVCTLALLFLTYF), 172-192 (VTIIFLAQCIKVTAVFLAQCV), 218-238 (VVIIWLLWVVICYTLFLRSKF), 252-272 (CSISAALLLFLLYVRLPFWTL), 276-296 (FSGLFQVLGVQSCVVIVTKGL), and 306-326 (ATGYEIEVSSLFVIGNFLFFY).

It belongs to the WTF family. In terms of assembly, homomer. Forms protein aggregates. The two isoforms can interact with each other and with themselves. High sequence similarity is required for their interaction.

It is found in the spore membrane. The protein resides in the vacuole membrane. It localises to the ascus epiplasm. Its subcellular location is the cytoplasm. The protein localises to the endoplasmic reticulum membrane. Functionally, promotes unequal transmission of alleles from the parental zygote to progeny spores by acting as poison/antidote system where the poison and antidote proteins are produced from the same locus; the poison component is trans-acting and targets all spores within an ascus whereas the antidote component is spore-specific, leading to poisoning of all progeny that do not inherit the allele. In terms of biological role, localizes isoform 2 to the vacuole thereby facilitating its degradation. Its function is as follows. Forms toxic aggregates that disrupt spore maturation. In Schizosaccharomyces pombe (Fission yeast), this protein is Meiotic driver cw9.